A 469-amino-acid chain; its full sequence is ATP synthase subunit beta (469 aa).

156 to 163 is a binding site for ATP; it reads GGAGVGKT.

This sequence belongs to the ATPase alpha/beta chains family. F-type ATPases have 2 components, CF(1) - the catalytic core - and CF(0) - the membrane proton channel. CF(1) has five subunits: alpha(3), beta(3), gamma(1), delta(1), epsilon(1). CF(0) has three main subunits: a(1), b(2) and c(9-12). The alpha and beta chains form an alternating ring which encloses part of the gamma chain. CF(1) is attached to CF(0) by a central stalk formed by the gamma and epsilon chains, while a peripheral stalk is formed by the delta and b chains.

It localises to the cell membrane. The enzyme catalyses ATP + H2O + 4 H(+)(in) = ADP + phosphate + 5 H(+)(out). In terms of biological role, produces ATP from ADP in the presence of a proton gradient across the membrane. The catalytic sites are hosted primarily by the beta subunits. This Lactococcus lactis subsp. cremoris (strain MG1363) protein is ATP synthase subunit beta.